The chain runs to 259 residues: Probable ABC transporter permease protein RC0129 (259 aa).

5 consecutive transmembrane segments (helical) span residues 13 to 35 (TVKF…SSII), 49 to 69 (LFIG…SGAV), 148 to 168 (VITA…IGVM), 195 to 215 (PIDV…ISII), and 237 to 257 (AVVN…ELFF).

Belongs to the MlaE permease family.

The protein localises to the cell inner membrane. Could be part of an ABC transporter complex. This is Probable ABC transporter permease protein RC0129 from Rickettsia conorii (strain ATCC VR-613 / Malish 7).